Reading from the N-terminus, the 506-residue chain is MDTIKINPEFDGQFCKTTSLLDPEEFRRNGHMMVDFLADYFHNIEKYPVRSQVEPGYLERLLPDSAPIQPEPIEKILKDVRSDIFPGLTHWQSPNFFAYFPCSSSTAGILGEMLSAGLNVVGFSWIASPAATELESIVMDWLGKLINLPKTYLFSGGGGGVMQGTTCEVMLCTIVAARDKMLEKFGRENIDKLVVYASDQTHFSFQKAVKISGIKPENFRAIPTTKATEFSLNPESLRRAIQEDKKAGLIPLFLCTSIGTTSTTAVDPLKPLCEIAEEYGIWVHVDAAYAGSACICPEFQHFLDGVEHANSFSFNAHKWLFTTLDCCCLWLKDPSSLTKALSTNPEVLRNDATDSEQVVDYKDWQITLSRRFRSLKLWLVLKSYGVANLRNFIRSHIEMAKHFEELVAMDERFEIMAPRNFSLVCFRVSLLALEKKFNFVDETQVNEFNAKLLESIISSGNVYMTHTVVEGVYMIRFAVGAPLTDYPHIDMAWNVVRNHATMMLNA.

3 residues coordinate L-phenylalanine: P101, H202, and H317. K318 is modified (N6-(pyridoxal phosphate)lysine).

This sequence belongs to the group II decarboxylase family. In terms of assembly, homotetramer. The cofactor is pyridoxal 5'-phosphate. As to expression, highly expressed in corolla limbs and at lower levels in corolla tubes and ovaries.

The enzyme catalyses L-phenylalanine + O2 + H2O + H(+) = 2-phenylacetaldehyde + H2O2 + NH4(+) + CO2. Bifunctional enzyme that catalyzes the decarboxylation of L-phenylalanine to 2-phenylethylamine, which is then oxidized to form 2-phenylacetaldehyde, a constituent of floral scent. 2-phenylacetaldehyde is a precursor of 2-phenylethanol, another constituent of floral scent. This chain is Phenylacetaldehyde synthase, found in Petunia hybrida (Petunia).